The chain runs to 496 residues: Cytochrome P450 3A56 (496 aa).

Cys441 serves as a coordination point for heme.

The protein belongs to the cytochrome P450 family. It depends on heme as a cofactor. As to expression, highly expressed in liver and intestine. Moderate expression in gill and spleen. Low expression in kidney, brain and heart.

Its subcellular location is the endoplasmic reticulum membrane. The protein localises to the microsome membrane. It carries out the reaction an organic molecule + reduced [NADPH--hemoprotein reductase] + O2 = an alcohol + oxidized [NADPH--hemoprotein reductase] + H2O + H(+). Putative steroid 6-beta-hydroxylase. This chain is Cytochrome P450 3A56 (cyp3a56), found in Fundulus heteroclitus (Killifish).